Here is a 212-residue protein sequence, read N- to C-terminus: Protein RER1C (212 aa).

Methionine 1 bears the N-acetylmethionine mark. The next 4 membrane-spanning stretches (helical) occupy residues 55 to 75 (TVPHVLYRWIACLCVVLIYIV), 82 to 102 (GFYIITYAIGIYLLNLIIAFL), 135 to 155 (EFKFWLSIIRAFIIGFMMTFF), and 157 to 177 (VFDVPVFWPILLFYWVMLFFL).

It belongs to the RER1 family.

The protein resides in the membrane. Its function is as follows. Involved in the retrieval of endoplasmic reticulum membrane proteins from the early Golgi compartment. This Arabidopsis thaliana (Mouse-ear cress) protein is Protein RER1C (RER1C).